Reading from the N-terminus, the 848-residue chain is Nuclear cap-binding protein subunit 1 (848 aa).

Positions 8–228 constitute an MIF4G domain; that stretch reads LLRIGEKGPE…DLLDRIQSLA (221 aa). Positions 767-786 are disordered; that stretch reads EDDKPSAMDVDSENGNPKKS.

The protein belongs to the NCBP1 family. As to quaternary structure, component of the nuclear cap-binding complex (CBC), a heterodimer composed of ABH1/CBP80 and CBP20 that interacts with m7GpppG-capped RNA. Expressed in all tissues analyzed, including roots, stems, leaves and flowers.

It localises to the nucleus. The protein localises to the cytoplasm. Component of the cap-binding complex (CBC), which binds cotranscriptionally to the 5'-cap of pre-mRNAs and is involved in various processes such as pre-mRNA splicing and RNA-mediated gene silencing (RNAi) by microRNAs (miRNAs). The CBC complex is involved in miRNA-mediated RNA interference and is required for primary miRNA processing. In the CBC complex, ABH1/CBP80 does not bind directly capped RNAs (m7GpppG-capped RNA) but is required to stabilize the movement of the N-terminal loop of CBP20 and lock the CBC into a high affinity cap-binding state with the cap structure. Involved in flowering regulation, possibly by regulating pre-mRNA splicing of FLC gene. Acts as a negative regulator of abscisic acid signaling in guard cells. This chain is Nuclear cap-binding protein subunit 1 (ABH1), found in Arabidopsis thaliana (Mouse-ear cress).